A 188-amino-acid polypeptide reads, in one-letter code: dCTP deaminase (188 aa).

DCTP-binding positions include 111-116 (KSTYAR), 135-137 (TLE), Gln156, Tyr170, and Gln180. Residue Glu137 is the Proton donor/acceptor of the active site.

Belongs to the dCTP deaminase family. Homotrimer.

It catalyses the reaction dCTP + H2O + H(+) = dUTP + NH4(+). Its pathway is pyrimidine metabolism; dUMP biosynthesis; dUMP from dCTP (dUTP route): step 1/2. In terms of biological role, catalyzes the deamination of dCTP to dUTP. The chain is dCTP deaminase from Acidovorax sp. (strain JS42).